Reading from the N-terminus, the 169-residue chain is Ribosome maturation factor RimM (169 aa).

A PRC barrel domain is found at Asn-92–Asn-166.

Belongs to the RimM family. Binds ribosomal protein uS19.

The protein resides in the cytoplasm. An accessory protein needed during the final step in the assembly of 30S ribosomal subunit, possibly for assembly of the head region. Essential for efficient processing of 16S rRNA. May be needed both before and after RbfA during the maturation of 16S rRNA. It has affinity for free ribosomal 30S subunits but not for 70S ribosomes. The sequence is that of Ribosome maturation factor RimM from Buchnera aphidicola subsp. Cinara cedri (strain Cc).